The primary structure comprises 881 residues: Disks large homolog 2 (881 aa).

Disordered stretches follow at residues 16-41 and 63-88; these read HRQQ…MNPA and LSTT…SFPR. PDZ domains lie at 155–242, 250–337, and 424–505; these read EITL…RRRR, EIKL…GKPT, and KIVL…QYRP. Residues 539–609 enclose the SH3 domain; the sequence is KRSLYVRALF…PSKRRVERKE (71 aa). Positions 683–866 constitute a Guanylate kinase-like domain; it reads ARPVIILGPM…IYNQCKMVIE (184 aa). Residues 709–729 are disordered; the sequence is GSCVPPANSSDQEDTTRPKRD.

Belongs to the MAGUK family.

It is found in the cell membrane. The protein resides in the postsynaptic density. It localises to the synapse. Its subcellular location is the membrane. The protein localises to the cell projection. It is found in the axon. The protein resides in the perikaryon. Functionally, may play a role in synapse assembly and function. The polypeptide is Disks large homolog 2 (dlg2) (Danio rerio (Zebrafish)).